Here is a 262-residue protein sequence, read N- to C-terminus: Putative hydro-lyase Sca_2211 (262 aa).

This sequence belongs to the D-glutamate cyclase family.

The chain is Putative hydro-lyase Sca_2211 from Staphylococcus carnosus (strain TM300).